A 34-amino-acid chain; its full sequence is Cytochrome c oxidase polypeptide 2A (34 aa).

Position 1 is an N-formylmethionine (methionine 1). Residues 4–34 (KPKGALAVILVLTLTILVFWLGVYAVFFARG) form a helical membrane-spanning segment.

It is found in the cell membrane. It catalyses the reaction 4 Fe(II)-[cytochrome c] + O2 + 8 H(+)(in) = 4 Fe(III)-[cytochrome c] + 2 H2O + 4 H(+)(out). This is Cytochrome c oxidase polypeptide 2A (cbaD) from Thermus thermophilus (strain ATCC 27634 / DSM 579 / HB8).